Reading from the N-terminus, the 369-residue chain is 2-aminoethylphosphonate--pyruvate transaminase 1 (369 aa).

Lysine 191 is modified (N6-(pyridoxal phosphate)lysine).

The protein belongs to the class-V pyridoxal-phosphate-dependent aminotransferase family. PhnW subfamily. Homodimer. The cofactor is pyridoxal 5'-phosphate.

The catalysed reaction is (2-aminoethyl)phosphonate + pyruvate = phosphonoacetaldehyde + L-alanine. Involved in phosphonate degradation. The polypeptide is 2-aminoethylphosphonate--pyruvate transaminase 1 (Burkholderia lata (strain ATCC 17760 / DSM 23089 / LMG 22485 / NCIMB 9086 / R18194 / 383)).